The sequence spans 236 residues: Uridylate kinase (236 aa).

Position 10–13 (10–13 (KLSG)) interacts with ATP. Gly52 serves as a coordination point for UMP. The ATP site is built by Gly53 and Arg57. UMP is bound by residues Asp72 and 133–140 (TGNPFFTT). 3 residues coordinate ATP: Thr160, Tyr166, and Asp169.

Belongs to the UMP kinase family. Homohexamer.

It is found in the cytoplasm. The enzyme catalyses UMP + ATP = UDP + ADP. Its pathway is pyrimidine metabolism; CTP biosynthesis via de novo pathway; UDP from UMP (UMPK route): step 1/1. With respect to regulation, inhibited by UTP. In terms of biological role, catalyzes the reversible phosphorylation of UMP to UDP. The chain is Uridylate kinase from Cupriavidus necator (strain ATCC 17699 / DSM 428 / KCTC 22496 / NCIMB 10442 / H16 / Stanier 337) (Ralstonia eutropha).